The sequence spans 492 residues: Catalase isozyme 1 (492 aa).

Catalysis depends on residues His65 and Asn138. Tyr348 contributes to the heme binding site.

It belongs to the catalase family. As to quaternary structure, homotetramer. Requires heme as cofactor. Scutella, milky endosperm of immature kernels, leaves and epicotyls.

Its subcellular location is the peroxisome. The catalysed reaction is 2 H2O2 = O2 + 2 H2O. In terms of biological role, occurs in almost all aerobically respiring organisms and serves to protect cells from the toxic effects of hydrogen peroxide. In Zea mays (Maize), this protein is Catalase isozyme 1 (CAT1).